Consider the following 411-residue polypeptide: Multifunctional CCA protein (411 aa).

ATP-binding residues include Gly-8 and Arg-11. CTP contacts are provided by Gly-8 and Arg-11. Positions 21 and 23 each coordinate Mg(2+). ATP-binding residues include Arg-91, Arg-137, and Arg-140. Positions 91, 137, and 140 each coordinate CTP. An HD domain is found at 228 to 329; sequence CGIHTLMVAK…VNILDQIDSW (102 aa).

The protein belongs to the tRNA nucleotidyltransferase/poly(A) polymerase family. Bacterial CCA-adding enzyme type 1 subfamily. In terms of assembly, monomer. Can also form homodimers and oligomers. Requires Mg(2+) as cofactor. It depends on Ni(2+) as a cofactor.

The enzyme catalyses a tRNA precursor + 2 CTP + ATP = a tRNA with a 3' CCA end + 3 diphosphate. It carries out the reaction a tRNA with a 3' CCA end + 2 CTP + ATP = a tRNA with a 3' CCACCA end + 3 diphosphate. Its function is as follows. Catalyzes the addition and repair of the essential 3'-terminal CCA sequence in tRNAs without using a nucleic acid template. Adds these three nucleotides in the order of C, C, and A to the tRNA nucleotide-73, using CTP and ATP as substrates and producing inorganic pyrophosphate. tRNA 3'-terminal CCA addition is required both for tRNA processing and repair. Also involved in tRNA surveillance by mediating tandem CCA addition to generate a CCACCA at the 3' terminus of unstable tRNAs. While stable tRNAs receive only 3'-terminal CCA, unstable tRNAs are marked with CCACCA and rapidly degraded. This chain is Multifunctional CCA protein, found in Photobacterium profundum (strain SS9).